Reading from the N-terminus, the 239-residue chain is Tumor necrosis factor ligand superfamily member 8 (239 aa).

Residues 1-36 (MEPGLQQAGSCGAPSPDPAMQVQPGSVASPWRSTRP) form a disordered region. Residues 1–43 (MEPGLQQAGSCGAPSPDPAMQVQPGSVASPWRSTRPWRSTSRS) lie on the Cytoplasmic side of the membrane. Residues 44 to 67 (YFYLSTTALVCLVVAVAIILVLVV) traverse the membrane as a helical; Signal-anchor for type II membrane protein segment. Residues 68–239 (QKKDSTPNTT…LSVFLYSSSD (172 aa)) are Extracellular-facing. N-linked (GlcNAc...) asparagine glycans are attached at residues Asn75, Asn86, Asn114, Asn158, Asn194, and Asn206. In terms of domain architecture, THD spans 103–230 (SWAYLQVSKH…TNTFPLDNVL (128 aa)). A disulfide bridge links Cys156 with Cys182.

The protein belongs to the tumor necrosis factor family. In terms of assembly, homotrimer.

Its subcellular location is the membrane. Its function is as follows. Cytokine that binds to TNFRSF8/CD30. Induces proliferation of T-cells. The sequence is that of Tumor necrosis factor ligand superfamily member 8 (Tnfsf8) from Mus musculus (Mouse).